We begin with the raw amino-acid sequence, 436 residues long: GTPase Obg (436 aa).

The Obg domain maps to 2–160 (SMFLDTAKIK…RELQLELKIL (159 aa)). The OBG-type G domain maps to 161–338 (ADVGLVGFPS…LLDATAELLD (178 aa)). GTP-binding positions include 167 to 174 (GFPSVGKS), 192 to 196 (FTTIV), 214 to 217 (DLPG), 284 to 287 (NKMD), and 319 to 321 (SGL). Residues serine 174 and threonine 194 each coordinate Mg(2+). The OCT domain occupies 358-436 (GFDEEEKAFE…IGKFEFEFVD (79 aa)).

The protein belongs to the TRAFAC class OBG-HflX-like GTPase superfamily. OBG GTPase family. In terms of assembly, monomer. It depends on Mg(2+) as a cofactor.

The protein localises to the cytoplasm. In terms of biological role, an essential GTPase which binds GTP, GDP and possibly (p)ppGpp with moderate affinity, with high nucleotide exchange rates and a fairly low GTP hydrolysis rate. Plays a role in control of the cell cycle, stress response, ribosome biogenesis and in those bacteria that undergo differentiation, in morphogenesis control. The polypeptide is GTPase Obg (Streptococcus pneumoniae (strain CGSP14)).